Consider the following 76-residue polypeptide: MARKPPSFEEALTELEQLVERMEQGNLPLEESLKLFERGIELTRTCQKSLQDAEQKVQILLEENSLPTLKPFRDEP.

Belongs to the XseB family. As to quaternary structure, heterooligomer composed of large and small subunits.

The protein localises to the cytoplasm. It carries out the reaction Exonucleolytic cleavage in either 5'- to 3'- or 3'- to 5'-direction to yield nucleoside 5'-phosphates.. Functionally, bidirectionally degrades single-stranded DNA into large acid-insoluble oligonucleotides, which are then degraded further into small acid-soluble oligonucleotides. The chain is Exodeoxyribonuclease 7 small subunit from Methylococcus capsulatus (strain ATCC 33009 / NCIMB 11132 / Bath).